Reading from the N-terminus, the 217-residue chain is Pyridoxine/pyridoxamine 5'-phosphate oxidase (217 aa).

Substrate contacts are provided by residues 13–16 (RREY) and lysine 71. Residues 66 to 71 (RIVLLK), 81 to 82 (YT), arginine 87, lysine 88, and glutamine 110 each bind FMN. Residues tyrosine 128, arginine 132, and serine 136 each coordinate substrate. FMN-binding positions include 145–146 (QS) and tryptophan 190. 196–198 (RLH) contacts substrate. Arginine 200 contacts FMN.

The protein belongs to the pyridoxamine 5'-phosphate oxidase family. In terms of assembly, homodimer. FMN serves as cofactor.

The catalysed reaction is pyridoxamine 5'-phosphate + O2 + H2O = pyridoxal 5'-phosphate + H2O2 + NH4(+). It catalyses the reaction pyridoxine 5'-phosphate + O2 = pyridoxal 5'-phosphate + H2O2. It participates in cofactor metabolism; pyridoxal 5'-phosphate salvage; pyridoxal 5'-phosphate from pyridoxamine 5'-phosphate: step 1/1. It functions in the pathway cofactor metabolism; pyridoxal 5'-phosphate salvage; pyridoxal 5'-phosphate from pyridoxine 5'-phosphate: step 1/1. In terms of biological role, catalyzes the oxidation of either pyridoxine 5'-phosphate (PNP) or pyridoxamine 5'-phosphate (PMP) into pyridoxal 5'-phosphate (PLP). The chain is Pyridoxine/pyridoxamine 5'-phosphate oxidase from Photorhabdus laumondii subsp. laumondii (strain DSM 15139 / CIP 105565 / TT01) (Photorhabdus luminescens subsp. laumondii).